We begin with the raw amino-acid sequence, 456 residues long: Exodeoxyribonuclease 7 large subunit (456 aa).

It belongs to the XseA family. Heterooligomer composed of large and small subunits.

The protein resides in the cytoplasm. The enzyme catalyses Exonucleolytic cleavage in either 5'- to 3'- or 3'- to 5'-direction to yield nucleoside 5'-phosphates.. In terms of biological role, bidirectionally degrades single-stranded DNA into large acid-insoluble oligonucleotides, which are then degraded further into small acid-soluble oligonucleotides. This Erwinia tasmaniensis (strain DSM 17950 / CFBP 7177 / CIP 109463 / NCPPB 4357 / Et1/99) protein is Exodeoxyribonuclease 7 large subunit.